A 185-amino-acid polypeptide reads, in one-letter code: Neuronal vesicle trafficking-associated protein 1 (185 aa).

The Cytoplasmic segment spans residues methionine 1–lysine 82. The helical; Signal-anchor for type II membrane protein transmembrane segment at valine 83–tyrosine 103 threads the bilayer. At lysine 104–alanine 185 the chain is on the lumenal side.

The protein belongs to the NSG family.

The protein localises to the membrane. It is found in the golgi apparatus. Its subcellular location is the trans-Golgi network membrane. The protein resides in the endosome membrane. It localises to the cell projection. The protein localises to the dendrite. It is found in the early endosome membrane. Its subcellular location is the late endosome membrane. The protein resides in the lysosome lumen. It localises to the recycling endosome membrane. The protein localises to the cytoplasmic vesicle membrane. It is found in the golgi stack membrane. Its subcellular location is the endosome. The protein resides in the multivesicular body membrane. In terms of biological role, plays a role in the recycling mechanism in neurons of multiple receptors and acts at the level of early endosomes to promote sorting of receptors toward a recycling pathway. In Gallus gallus (Chicken), this protein is Neuronal vesicle trafficking-associated protein 1.